A 211-amino-acid polypeptide reads, in one-letter code: Stromal cell-derived factor 2 (211 aa).

The first 18 residues, 1-18 (MAVLSLLLLGGLWSAVGA), serve as a signal peptide directing secretion. 3 MIR domains span residues 21–75 (MAVV…IRGK), 83–138 (GTPI…VLCN), and 139–193 (GPYW…AMEG).

Ubiquitously expressed with highest expression in liver and kidney.

It is found in the secreted. The polypeptide is Stromal cell-derived factor 2 (Sdf2) (Mus musculus (Mouse)).